Consider the following 244-residue polypeptide: Globin-like protein 9 (244 aa).

The interval 1–38 (MRRMAKYDRSYSMQDAHGPNGLARRGTQRGCSRSKSTR) is disordered. In terms of domain architecture, Globin spans 47-200 (SLTFSQKQAL…LIDELRGGFE (154 aa)). Heme contacts are provided by His111 and His143.

It belongs to the globin family.

The sequence is that of Globin-like protein 9 from Caenorhabditis briggsae.